A 268-amino-acid polypeptide reads, in one-letter code: Tryptophan synthase alpha chain (268 aa).

Catalysis depends on proton acceptor residues Glu-49 and Asp-60.

This sequence belongs to the TrpA family. Tetramer of two alpha and two beta chains.

It catalyses the reaction (1S,2R)-1-C-(indol-3-yl)glycerol 3-phosphate + L-serine = D-glyceraldehyde 3-phosphate + L-tryptophan + H2O. It functions in the pathway amino-acid biosynthesis; L-tryptophan biosynthesis; L-tryptophan from chorismate: step 5/5. In terms of biological role, the alpha subunit is responsible for the aldol cleavage of indoleglycerol phosphate to indole and glyceraldehyde 3-phosphate. The protein is Tryptophan synthase alpha chain of Salmonella paratyphi A (strain ATCC 9150 / SARB42).